The following is a 417-amino-acid chain: Gamma-glutamyl phosphate reductase (417 aa).

This sequence belongs to the gamma-glutamyl phosphate reductase family.

It localises to the cytoplasm. The enzyme catalyses L-glutamate 5-semialdehyde + phosphate + NADP(+) = L-glutamyl 5-phosphate + NADPH + H(+). It participates in amino-acid biosynthesis; L-proline biosynthesis; L-glutamate 5-semialdehyde from L-glutamate: step 2/2. Its function is as follows. Catalyzes the NADPH-dependent reduction of L-glutamate 5-phosphate into L-glutamate 5-semialdehyde and phosphate. The product spontaneously undergoes cyclization to form 1-pyrroline-5-carboxylate. This Desulfitobacterium hafniense (strain DSM 10664 / DCB-2) protein is Gamma-glutamyl phosphate reductase.